The following is a 295-amino-acid chain: GATA transcription factor 18 (295 aa).

The GATA-type zinc-finger motif lies at 148–202 (SLLARRCANCDTTSTPLWRNGPRGPKSLCNACGIRFKKEERRTTAATGNTVVGAA).

This sequence belongs to the type IV zinc-finger family. Class B subfamily. Homodimer. Forms heterodimers with GATA19, GATA22 and GATA21. Interacts with JAG. Binds to AGO10/PNH. Expressed in vegetative and inflorescence shoot apical meristems (SAMs), axillary (SAMs), floral meristems, developing ovules and stamens, vascular tissues, and in the embryo.

It is found in the nucleus. Its function is as follows. Transcriptional factor that specifically binds 5'-GATA-3' or 5'-GAT-3' motifs within gene promoters (including its own promoter and GATA21 promoter), thus regulating the expression of genes mostly involved in hormone responses and floral organ specification (including genes regulating hormones responses). Regulates both flower and shoot apical meristem (SAM) development, especially for establishing organ boundaries in shoots and flowers, probably by controlling the number and position of WUS-expressing cells. Coregulates, with AGO10/PNH, the shoot apical meristem (SAM) organization. Regulates floral organ development via the promotion of JAG and NPR5/BOP2 expression. Modulates cytokinin homeostasis in organ boundaries by regulating CKX3 expression. Involved in cell proliferation and differentiation. Required to position the inductive proembryo boundary via the regulation of gene expression and for early embryonic development. Together with GIF1/AN3, mediates cotyledon identity by preventing ectopic root formation through the repression of PLT1 expression. This is GATA transcription factor 18 from Arabidopsis thaliana (Mouse-ear cress).